The primary structure comprises 137 residues: Protein yippee-like F37A8.5 (137 aa).

Positions 1-20 (MHFRMKVLENSSKHNTPKKQ) are disordered. One can recognise a Yippee domain in the interval 32–129 (RCYSCIHCRA…IELAHMVKDN (98 aa)). Residues Cys-36, Cys-39, Cys-92, and Cys-95 each contribute to the Zn(2+) site.

This sequence belongs to the yippee family.

The protein is Protein yippee-like F37A8.5 of Caenorhabditis elegans.